Reading from the N-terminus, the 643-residue chain is Enzymatic polyprotein (643 aa).

The region spanning Asn6–Pro209 is the Peptidase A3A domain. The active-site For protease activity is Asp26. The Reverse transcriptase domain maps to Val226–Leu410. The Mg(2+) site is built by Asp296, Asp360, and Asp361.

It belongs to the caulimoviridae enzymatic polyprotein family.

It carries out the reaction DNA(n) + a 2'-deoxyribonucleoside 5'-triphosphate = DNA(n+1) + diphosphate. Functionally, encodes for at least two polypeptides: protease (PR) and reverse transcriptase (RT). The protease processes the polyprotein in cis. Reverse transcriptase is multifunctional enzyme that converts the viral RNA genome into dsDNA in viral cytoplasmic capsids. This enzyme displays a DNA polymerase activity that can copy either DNA or RNA templates, and a ribonuclease H (RNase H) activity that cleaves the RNA strand of RNA-DNA heteroduplexes in a partially processive 3'- to 5'-endonucleasic mode. Neo-synthesized pregenomic RNA (pgRNA) are encapsidated, and reverse-transcribed inside the nucleocapsid. Partial (+)DNA is synthesized from the (-)DNA template and generates the relaxed circular DNA (RC-DNA) genome. After budding and infection, the RC-DNA migrates in the nucleus, and is converted into a plasmid-like covalently closed circular DNA (cccDNA). In Cestrum parqui (CmYLCV), this protein is Enzymatic polyprotein.